The primary structure comprises 81 residues: Small ribosomal subunit protein bS18 (81 aa).

This sequence belongs to the bacterial ribosomal protein bS18 family. Part of the 30S ribosomal subunit. Forms a tight heterodimer with protein bS6.

In terms of biological role, binds as a heterodimer with protein bS6 to the central domain of the 16S rRNA, where it helps stabilize the platform of the 30S subunit. The chain is Small ribosomal subunit protein bS18 from Chlamydia trachomatis serovar L2 (strain ATCC VR-902B / DSM 19102 / 434/Bu).